Reading from the N-terminus, the 349-residue chain is S-adenosylmethionine:tRNA ribosyltransferase-isomerase (349 aa).

Belongs to the QueA family. Monomer.

It localises to the cytoplasm. The enzyme catalyses 7-aminomethyl-7-carbaguanosine(34) in tRNA + S-adenosyl-L-methionine = epoxyqueuosine(34) in tRNA + adenine + L-methionine + 2 H(+). It participates in tRNA modification; tRNA-queuosine biosynthesis. Its function is as follows. Transfers and isomerizes the ribose moiety from AdoMet to the 7-aminomethyl group of 7-deazaguanine (preQ1-tRNA) to give epoxyqueuosine (oQ-tRNA). In Parabacteroides distasonis (strain ATCC 8503 / DSM 20701 / CIP 104284 / JCM 5825 / NCTC 11152), this protein is S-adenosylmethionine:tRNA ribosyltransferase-isomerase.